A 129-amino-acid chain; its full sequence is MARDKQRTKKKERKNIAAGVAHVNSSFNNTKILISDVQGNAIAWSSAGTMGFKGSRKSTPYAAQMAAEDAGKKAQEHGVKTLEVQVQGPGSGRESALRALAAVGFNITAIRDVTPIAHNGCRPPKRRRV.

This sequence belongs to the universal ribosomal protein uS11 family. As to quaternary structure, part of the 30S ribosomal subunit. Interacts with proteins S7 and S18. Binds to IF-3.

Its function is as follows. Located on the platform of the 30S subunit, it bridges several disparate RNA helices of the 16S rRNA. Forms part of the Shine-Dalgarno cleft in the 70S ribosome. The sequence is that of Small ribosomal subunit protein uS11 from Dinoroseobacter shibae (strain DSM 16493 / NCIMB 14021 / DFL 12).